The primary structure comprises 206 residues: Protein GET1 (206 aa).

Residues 1–4 are Lumenal-facing; the sequence is MPSL. A helical membrane pass occupies residues 5–24; that stretch reads LITILLLNIVIYVINTIGAA. Topologically, residues 25-110 are cytoplasmic; sequence TIDSLLWLFY…SFDMTVKSVR (86 aa). Residues 42-99 are a coiled coil; the sequence is SHMAREQRRLKREVIQLKREMNATSSQDEFAKWAKLRRRHDKALETYEAKNNELTQCK. Residues 111 to 131 form a helical membrane-spanning segment; sequence WAATSGLMLFLQFWYSKRPIF. Residues 132-155 are Lumenal-facing; sequence TLPPGWIPWQVQWVLSFPRAPMGT. The helical transmembrane segment at 156–172 threads the bilayer; sequence VSIQIWGGACATVVALV. At 173-206 the chain is on the cytoplasmic side; that stretch reads GDAVGATMGFVSASKKEGMKVGAGVGEKEGKKSQ.

The protein belongs to the WRB/GET1 family. In terms of assembly, interacts with GET3.

The protein localises to the endoplasmic reticulum membrane. Its function is as follows. Required for the post-translational delivery of tail-anchored (TA) proteins to the endoplasmic reticulum. Acts as a membrane receptor for soluble GET3, which recognizes and selectively binds the transmembrane domain of TA proteins in the cytosol. The protein is Protein GET1 of Ajellomyces dermatitidis (strain ER-3 / ATCC MYA-2586) (Blastomyces dermatitidis).